The primary structure comprises 117 residues: Iron-sulfur cluster insertion protein ErpA (117 aa).

The iron-sulfur cluster site is built by C45, C109, and C111.

This sequence belongs to the HesB/IscA family. As to quaternary structure, homodimer. The cofactor is iron-sulfur cluster.

Functionally, required for insertion of 4Fe-4S clusters for at least IspG. This chain is Iron-sulfur cluster insertion protein ErpA, found in Saccharophagus degradans (strain 2-40 / ATCC 43961 / DSM 17024).